A 20-amino-acid polypeptide reads, in one-letter code: Antiviral protein Y3 (20 aa).

The sequence is that of Antiviral protein Y3 from Pleurotus citrinopileatus (Golden oyster mushroom).